We begin with the raw amino-acid sequence, 601 residues long: Deuterosome assembly protein 1 (601 aa).

3 coiled-coil regions span residues 14–59, 86–196, and 226–277; these read CEAE…NAQT, TQNY…GKKQ, and IEKL…ELQS. The interval 305–329 is disordered; sequence AQDNRKRVESSYSPSPKEAERKRKE. A coiled-coil region spans residues 354–397; the sequence is EEGLCSEQERLRSEISELTQELHQKEVTIATVMKKAALLERQLK. Phosphoserine is present on serine 544. The stretch at 555-586 forms a coiled coil; sequence AAQHFLMEEERRAKELEKLLNTHIDELQRHTE.

It belongs to the CEP63 family. As to quaternary structure, interacts with CEP152; the interaction is mutually exclusive with CEP63. In terms of tissue distribution, highly enriched in multicilia-abundant tissues (trachea and oviduct).

The protein resides in the cytoplasm. Key structural component of the deuterosome, a structure that promotes de novo centriole amplification in multiciliated cells. Deuterosome-mediated centriole amplification occurs in terminally differentiated multiciliated cells and can generate more than 100 centrioles. Probably sufficient for the specification and formation of the deuterosome inner core. Interacts with CEP152 and recruits PLK4 to activate centriole biogenesis. This chain is Deuterosome assembly protein 1, found in Mus musculus (Mouse).